We begin with the raw amino-acid sequence, 522 residues long: GMP synthase [glutamine-hydrolyzing] (522 aa).

One can recognise a Glutamine amidotransferase type-1 domain in the interval 9–204 (KILILDFGAQ…VVDICGCQTL (196 aa)). Catalysis depends on Cys86, which acts as the Nucleophile. Residues His178 and Glu180 contribute to the active site. The 193-residue stretch at 205 to 397 (WTAANIIEDQ…LGLPHAMVYR (193 aa)) folds into the GMPS ATP-PPase domain. 232–238 (SGGVDSS) serves as a coordination point for ATP.

Homodimer.

It catalyses the reaction XMP + L-glutamine + ATP + H2O = GMP + L-glutamate + AMP + diphosphate + 2 H(+). Its pathway is purine metabolism; GMP biosynthesis; GMP from XMP (L-Gln route): step 1/1. In terms of biological role, catalyzes the synthesis of GMP from XMP. The protein is GMP synthase [glutamine-hydrolyzing] of Xylella fastidiosa (strain M12).